A 471-amino-acid chain; its full sequence is Siroheme synthase (471 aa).

A precorrin-2 dehydrogenase /sirohydrochlorin ferrochelatase region spans residues 1–203 (MDYLPLFADI…GDWESAEKTL (203 aa)). Residues 22–23 (EV) and 43–44 (KN) each bind NAD(+). S128 is modified (phosphoserine). The uroporphyrinogen-III C-methyltransferase stretch occupies residues 215–471 (GEIILVGAGP…DTKSSLINLA (257 aa)). P224 is an S-adenosyl-L-methionine binding site. D247 serves as the catalytic Proton acceptor. K269 functions as the Proton donor in the catalytic mechanism. Residues 300 to 302 (GGD), I305, 330 to 331 (TA), M382, and A411 contribute to the S-adenosyl-L-methionine site.

This sequence in the N-terminal section; belongs to the precorrin-2 dehydrogenase / sirohydrochlorin ferrochelatase family. The protein in the C-terminal section; belongs to the precorrin methyltransferase family.

The enzyme catalyses uroporphyrinogen III + 2 S-adenosyl-L-methionine = precorrin-2 + 2 S-adenosyl-L-homocysteine + H(+). The catalysed reaction is precorrin-2 + NAD(+) = sirohydrochlorin + NADH + 2 H(+). It catalyses the reaction siroheme + 2 H(+) = sirohydrochlorin + Fe(2+). Its pathway is cofactor biosynthesis; adenosylcobalamin biosynthesis; precorrin-2 from uroporphyrinogen III: step 1/1. It functions in the pathway cofactor biosynthesis; adenosylcobalamin biosynthesis; sirohydrochlorin from precorrin-2: step 1/1. It participates in porphyrin-containing compound metabolism; siroheme biosynthesis; precorrin-2 from uroporphyrinogen III: step 1/1. The protein operates within porphyrin-containing compound metabolism; siroheme biosynthesis; siroheme from sirohydrochlorin: step 1/1. Its pathway is porphyrin-containing compound metabolism; siroheme biosynthesis; sirohydrochlorin from precorrin-2: step 1/1. Its function is as follows. Multifunctional enzyme that catalyzes the SAM-dependent methylations of uroporphyrinogen III at position C-2 and C-7 to form precorrin-2 via precorrin-1. Then it catalyzes the NAD-dependent ring dehydrogenation of precorrin-2 to yield sirohydrochlorin. Finally, it catalyzes the ferrochelation of sirohydrochlorin to yield siroheme. The chain is Siroheme synthase from Zymomonas mobilis subsp. mobilis (strain ATCC 31821 / ZM4 / CP4).